Consider the following 275-residue polypeptide: Dermonecrotic toxin SpaSicTox-betaIIA3 (275 aa).

The active site involves H5. Residues E25 and D27 each contribute to the Mg(2+) site. The Nucleophile role is filled by H41. Disulfide bonds link C45-C51 and C47-C190. D85 contributes to the Mg(2+) binding site.

This sequence belongs to the arthropod phospholipase D family. Class II subfamily. Requires Mg(2+) as cofactor. In terms of tissue distribution, expressed by the venom gland.

The protein localises to the secreted. It catalyses the reaction an N-(acyl)-sphingosylphosphocholine = an N-(acyl)-sphingosyl-1,3-cyclic phosphate + choline. It carries out the reaction an N-(acyl)-sphingosylphosphoethanolamine = an N-(acyl)-sphingosyl-1,3-cyclic phosphate + ethanolamine. The enzyme catalyses a 1-acyl-sn-glycero-3-phosphocholine = a 1-acyl-sn-glycero-2,3-cyclic phosphate + choline. The catalysed reaction is a 1-acyl-sn-glycero-3-phosphoethanolamine = a 1-acyl-sn-glycero-2,3-cyclic phosphate + ethanolamine. Dermonecrotic toxins cleave the phosphodiester linkage between the phosphate and headgroup of certain phospholipids (sphingolipid and lysolipid substrates), forming an alcohol (often choline) and a cyclic phosphate. This toxin acts on sphingomyelin (SM). It may also act on ceramide phosphoethanolamine (CPE), lysophosphatidylcholine (LPC) and lysophosphatidylethanolamine (LPE), but not on lysophosphatidylserine (LPS), and lysophosphatidylglycerol (LPG). It acts by transphosphatidylation, releasing exclusively cyclic phosphate products as second products. Induces dermonecrosis, hemolysis, increased vascular permeability, edema, inflammatory response, and platelet aggregation. The chain is Dermonecrotic toxin SpaSicTox-betaIIA3 from Sicarius patagonicus (Six-eyed sand spider).